Consider the following 183-residue polypeptide: MKQFIEFIPLIVFFAVYKFYDIYTATGALVVVTGLQLIYSWVRYRKVEKMQLFTFLLVGFFGGLTVFFHDDAFIKWKVTVINILFALGLLISRYGFGKNLIKQMLAKELQAPDAIWDRVNLAWVGFFTVCGLLNLYVAFNLPQEMWVNFKVFGLLGMTLVFTLLSGVYLYRHLPAEQKGELKK.

Helical transmembrane passes span 22–44, 54–74, 76–96, 119–139, and 149–169; these read IYTATGALVVVTGLQLIYSWVRY, TFLLVGFFGGLTVFFHDDAFI, WKVTVINILFALGLLISRYGF, VNLAWVGFFTVCGLLNLYVAF, and FKVFGLLGMTLVFTLLSGVYL.

It belongs to the YciB family.

It is found in the cell inner membrane. Functionally, plays a role in cell envelope biogenesis, maintenance of cell envelope integrity and membrane homeostasis. The sequence is that of Inner membrane-spanning protein YciB from Aeromonas salmonicida (strain A449).